The following is a 131-amino-acid chain: Peptidyl-prolyl cis-trans isomerase NIMA-interacting 4 (131 aa).

Residues 1 to 25 (MPPKGKSGSGKGGKGGAASGSDSAD) are necessary for nuclear localization and DNA-binding. Residues 1–39 (MPPKGKSGSGKGGKGGAASGSDSADKKSQGPKGGGNAVK) are disordered. The tract at residues 1-41 (MPPKGKSGSGKGGKGGAASGSDSADKKSQGPKGGGNAVKVR) is necessary for association with the pre-rRNP complexes. Gly residues predominate over residues 7–18 (SGSGKGGKGGAA). Ser-19 carries the phosphoserine; by CK2 modification. In terms of domain architecture, PpiC spans 35-129 (GNAVKVRHIL…FGYHIIMVEG (95 aa)).

This sequence belongs to the PpiC/parvulin rotamase family. PIN4 subfamily. In terms of assembly, found in pre-ribosomal ribonucleoprotein (pre-rRNP) complexes. Post-translationally, phosphorylated. Phosphorylation occurs both in the nucleus and the cytoplasm. Phosphorylation at Ser-19 does not affect its PPIase activity but is required for nuclear localization, and the dephosphorylation is a prerequisite for the binding to DNA. The unphosphorylated form associates with the pre-rRNP complexes in the nucleus.

The protein localises to the nucleus. It is found in the nucleolus. It localises to the cytoplasm. Its subcellular location is the cytoskeleton. The protein resides in the spindle. It carries out the reaction [protein]-peptidylproline (omega=180) = [protein]-peptidylproline (omega=0). Involved as a ribosomal RNA processing factor in ribosome biogenesis. Binds to tightly bent AT-rich stretches of double-stranded DNA. In Mus musculus (Mouse), this protein is Peptidyl-prolyl cis-trans isomerase NIMA-interacting 4 (Pin4).